A 293-amino-acid chain; its full sequence is Probable porphobilinogen deaminase (293 aa).

At C233 the chain carries S-(dipyrrolylmethanemethyl)cysteine.

Belongs to the HMBS family. Requires dipyrromethane as cofactor.

It catalyses the reaction 4 porphobilinogen + H2O = hydroxymethylbilane + 4 NH4(+). It functions in the pathway porphyrin-containing compound metabolism; protoporphyrin-IX biosynthesis; coproporphyrinogen-III from 5-aminolevulinate: step 2/4. Functionally, tetrapolymerization of the monopyrrole PBG into the hydroxymethylbilane pre-uroporphyrinogen in several discrete steps. The sequence is that of Probable porphobilinogen deaminase from Saccharolobus islandicus (strain M.16.27) (Sulfolobus islandicus).